The chain runs to 354 residues: Ferrochelatase (354 aa).

The Fe cation site is built by His-214 and Glu-295.

This sequence belongs to the ferrochelatase family.

It localises to the cytoplasm. The enzyme catalyses heme b + 2 H(+) = protoporphyrin IX + Fe(2+). It functions in the pathway porphyrin-containing compound metabolism; protoheme biosynthesis; protoheme from protoporphyrin-IX: step 1/1. Its function is as follows. Catalyzes the ferrous insertion into protoporphyrin IX. This Burkholderia lata (strain ATCC 17760 / DSM 23089 / LMG 22485 / NCIMB 9086 / R18194 / 383) protein is Ferrochelatase.